The sequence spans 276 residues: MPELPEVETVRRTLTGLVKGKTIKSVEIRWPNIIKRPAEPEEFARKLAGETIQSIGRRGKFLLFHLDHYVMVSHLRMEGKYGLHQAEEPDDKHVHVIFTMTDGTQLRYRDVRKFGTMHLFKPGEEAGELPLSQLGPEPDAEEFTSAYLKDRLAKTNRAVKTALLDQKTVVGLGNIYVDEALFRAGVHPETKANQLSDKTIKTLHAEIKNTLQEAIDAGGSTVRSYINSQGEIGMFQLQHFVYGKKDEPCKNCGTMISKIVVGGRGTHFCAKCQTKK.

Proline 2 functions as the Schiff-base intermediate with DNA in the catalytic mechanism. The active-site Proton donor is glutamate 3. The active-site Proton donor; for beta-elimination activity is lysine 60. DNA-binding residues include histidine 93 and arginine 112. An FPG-type zinc finger spans residues 240 to 274; sequence FVYGKKDEPCKNCGTMISKIVVGGRGTHFCAKCQT. The active-site Proton donor; for delta-elimination activity is the arginine 264.

This sequence belongs to the FPG family. In terms of assembly, monomer. Zn(2+) is required as a cofactor.

The catalysed reaction is Hydrolysis of DNA containing ring-opened 7-methylguanine residues, releasing 2,6-diamino-4-hydroxy-5-(N-methyl)formamidopyrimidine.. It carries out the reaction 2'-deoxyribonucleotide-(2'-deoxyribose 5'-phosphate)-2'-deoxyribonucleotide-DNA = a 3'-end 2'-deoxyribonucleotide-(2,3-dehydro-2,3-deoxyribose 5'-phosphate)-DNA + a 5'-end 5'-phospho-2'-deoxyribonucleoside-DNA + H(+). Its function is as follows. Involved in the GO system responsible for removing an oxidatively damaged form of guanine (7,8-dihydro-8-oxoguanine, 8-oxo-dGTP) from DNA and the nucleotide pool. 8-oxo-dGTP is inserted opposite dA and dC residues of template DNA with almost equal efficiency thus leading to A.T to G.C transversions. Involved in base excision repair of DNA damaged by oxidation or by mutagenic agents. Acts as a DNA glycosylase that recognizes and removes damaged bases. Has a preference for oxidized purines, such as 8-oxo-dGTP. Has AP (apurinic/apyrimidinic) lyase activity and introduces nicks in the DNA strand. Cleaves the DNA backbone by beta-delta elimination to generate a single-strand break at the site of the removed base. The chain is Formamidopyrimidine-DNA glycosylase (mutM) from Bacillus subtilis (strain 168).